Here is a 358-residue protein sequence, read N- to C-terminus: Cyanide hydratase (358 aa).

In terms of domain architecture, CN hydrolase spans 8-287; it reads YKAAAVNAEP…QGLLFVDIDL (280 aa). The active-site Proton acceptor is the Glu48. Residue Lys130 is part of the active site. Cys165 (nucleophile) is an active-site residue.

The protein belongs to the carbon-nitrogen hydrolase superfamily. Nitrilase family. In terms of assembly, oligomer of dimers, forming left-handed helical fibers.

The enzyme catalyses formamide = hydrogen cyanide + H2O. In terms of biological role, catalyzes the hydration of cyanide to formamide. Degradation of cyanide may be important for plant pathogenic fungi in infection of cyanogenic plants. The protein is Cyanide hydratase of Penicillium rubens (strain ATCC 28089 / DSM 1075 / NRRL 1951 / Wisconsin 54-1255) (Penicillium chrysogenum).